The chain runs to 218 residues: Dehydration-responsive element-binding protein 1B (218 aa).

The tract at residues M1–R26 is disordered. The AP2/ERF DNA-binding region spans V32–A95. The interval S131–N151 is disordered.

It belongs to the AP2/ERF transcription factor family. ERF subfamily.

The protein localises to the nucleus. Its function is as follows. Transcriptional activator that binds specifically to the DNA sequence 5'-[AG]CCGAC-3'. Binding to the C-repeat/DRE element mediates high salinity- and dehydration-inducible transcription. Confers resistance to high salt, cold and drought stress. The polypeptide is Dehydration-responsive element-binding protein 1B (DREB1B) (Oryza sativa subsp. japonica (Rice)).